The chain runs to 83 residues: Gene 41 protein (83 aa).

The polypeptide is Gene 41 protein (41) (Mycobacterium phage L5 (Mycobacteriophage L5)).